We begin with the raw amino-acid sequence, 104 residues long: Large ribosomal subunit protein bL21 (104 aa).

This sequence belongs to the bacterial ribosomal protein bL21 family. As to quaternary structure, part of the 50S ribosomal subunit. Contacts protein L20.

Functionally, this protein binds to 23S rRNA in the presence of protein L20. This is Large ribosomal subunit protein bL21 from Alkalilimnicola ehrlichii (strain ATCC BAA-1101 / DSM 17681 / MLHE-1).